A 122-amino-acid polypeptide reads, in one-letter code: Large ribosomal subunit protein uL14 (122 aa).

This sequence belongs to the universal ribosomal protein uL14 family. As to quaternary structure, part of the 50S ribosomal subunit. Forms a cluster with proteins L3 and L19. In the 70S ribosome, L14 and L19 interact and together make contacts with the 16S rRNA in bridges B5 and B8.

Functionally, binds to 23S rRNA. Forms part of two intersubunit bridges in the 70S ribosome. This is Large ribosomal subunit protein uL14 from Anaeromyxobacter dehalogenans (strain 2CP-1 / ATCC BAA-258).